The following is a 205-amino-acid chain: MRSRRGLLIVLSGPSGVGKGTVRKELFSHEDTRFQYSISVTTRKPREGEVDGVDYFFKEREEFEEMIRNEKLLEWAEFVGNYYGTPIDYVEKTLQEGKDVFLEIEVQGAIQVKKAFPEGVFIFLAPPSLSELKNRIVGRGTETEDVIENRLTVAKEEIDMMDAYDYVVENDQVELACERIKAIVVGEHCRRERVAKYYKEMTEGL.

The Guanylate kinase-like domain occupies glycine 6 to valine 185. Glycine 13 to glycine 20 is a binding site for ATP.

Belongs to the guanylate kinase family.

The protein localises to the cytoplasm. The catalysed reaction is GMP + ATP = GDP + ADP. Functionally, essential for recycling GMP and indirectly, cGMP. The sequence is that of Guanylate kinase from Bacillus anthracis.